The following is an 873-amino-acid chain: Kinase suppressor of Ras 1 (873 aa).

Disordered regions lie at residues Met-1 to Ala-24, Glu-174 to Ser-230, and Leu-251 to Lys-281. The interval Met-1–Gly-170 is mediates association with membranes. A compositionally biased stretch (polar residues) spans Ala-206–Val-216. 2 positions are modified to phosphothreonine: Thr-256 and Thr-260. Ser-297 carries the post-translational modification Phosphoserine; by MARK3. Ser-320 carries the post-translational modification Phosphoserine. A Phorbol-ester/DAG-type zinc finger spans residues Thr-333–Cys-377. His-334 serves as a coordination point for Zn(2+). A Phosphoserine modification is found at Ser-337. Zn(2+) contacts are provided by Cys-346, Cys-349, Cys-359, Cys-362, His-367, Cys-370, and Cys-377. Ser-392 carries the post-translational modification Phosphoserine; by MARK3. Position 411 is a phosphothreonine (Thr-411). 2 disordered regions span residues Leu-416–Phe-473 and His-506–Arg-544. The segment covering Ser-429–Thr-458 has biased composition (low complexity). The span at His-506–Glu-519 shows a compositional bias: basic and acidic residues. A Phosphoserine modification is found at Ser-518. The span at Ala-520–Asp-530 shows a compositional bias: acidic residues. Residues Val-563–Leu-833 enclose the Protein kinase domain. Ile-569 to Val-577 is an ATP binding site. Asp-683 serves as the catalytic Proton acceptor. ATP contacts are provided by Lys-685 and Asp-700. A Phosphoserine modification is found at Ser-838.

The protein belongs to the protein kinase superfamily. TKL Ser/Thr protein kinase family. As to quaternary structure, homodimer. Heterodimerizes (via N-terminus) with BRAF (via N-terminus) in a MAP2K1/MEK1 or MAP2K2/MEK2-dependent manner. Interacts with MAP2K1/MEK1 and MAP2K2/MEK2. Binding to MAP2K1/MEK1 releases the intramolecular inhibitory interaction between KSR1 N-terminus and kinase domains which is required for the subsequent RSK1 dimerization with BRAF. Identified in a complex with AKAP13, MAP2K1 and BRAF. Interacts with AKAP13 and BRAF. Interacts with RAF and MAPK/ERK, in a Ras-dependent manner. Interacts with 14-3-3 proteins including YWHAB. Interacts with HSP90AA1/HSP90, YWHAE/14-3-3 and CDC37. The binding of 14-3-3 proteins to phosphorylated KSR1 prevents the membrane localization. Interacts with MARK3/C-TAK1. Interacts with PPP2R1A and PPP2CA. Interacts with VRK2. Phosphorylated on Ser-297 and, to a higher extent, on Ser-392 by MARK3. Dephosphorylated on Ser-392 by PPP2CA. Phosphorylated KSR1 is cytoplasmic and dephosphorylated KSR1 is membrane-associated. Phosphorylated by PKA at Ser-838. Phosphorylation at Ser-838 is required for cAMP-dependent activation of MAPK1 and/or MAPK3. In terms of tissue distribution, expressed in brain, spleen and testis. Isoform 1 is highly expressed spleen and weakly in testis, and isoform 2 is highly expressed in brain and weakly in testis.

It is found in the cytoplasm. The protein localises to the membrane. The protein resides in the cell membrane. It localises to the cell projection. Its subcellular location is the ruffle membrane. It is found in the endoplasmic reticulum membrane. It carries out the reaction L-seryl-[protein] + ATP = O-phospho-L-seryl-[protein] + ADP + H(+). It catalyses the reaction L-threonyl-[protein] + ATP = O-phospho-L-threonyl-[protein] + ADP + H(+). Functionally, part of a multiprotein signaling complex which promotes phosphorylation of Raf family members and activation of downstream MAP kinases. Independently of its kinase activity, acts as MAP2K1/MEK1 and MAP2K2/MEK2-dependent allosteric activator of BRAF; upon binding to MAP2K1/MEK1 or MAP2K2/MEK2, dimerizes with BRAF and promotes BRAF-mediated phosphorylation of MAP2K1/MEK1 and/or MAP2K2/MEK2. Promotes activation of MAPK1 and/or MAPK3, both in response to EGF and to cAMP. Its kinase activity is unsure. Some protein kinase activity has been detected in vitro, however the physiological relevance of this activity is unknown. The protein is Kinase suppressor of Ras 1 (Ksr1) of Mus musculus (Mouse).